Here is a 79-residue protein sequence, read N- to C-terminus: Small ribosomal subunit protein uS17 (79 aa).

This sequence belongs to the universal ribosomal protein uS17 family. In terms of assembly, part of the 30S ribosomal subunit.

In terms of biological role, one of the primary rRNA binding proteins, it binds specifically to the 5'-end of 16S ribosomal RNA. The polypeptide is Small ribosomal subunit protein uS17 (Caulobacter sp. (strain K31)).